We begin with the raw amino-acid sequence, 1627 residues long: Formin-like protein 5 (1627 aa).

The Phosphatase tensin-type domain maps to 5–194; that stretch reads RKFFLKKTPD…HYITRQGSGP (190 aa). C127 serves as the catalytic Phosphocysteine intermediate. The C2 tensin-type domain maps to 200-337; the sequence is SRPLILDSIV…FRAEVVFSDP (138 aa). Disordered regions lie at residues 370–413, 680–787, 801–1181, 1241–1261, and 1571–1627; these read EAEE…LEKH, TKRE…YDSS, KFNV…RGVV, AAVP…SLGS, and KQAE…KDVG. Basic and acidic residues-rich tracts occupy residues 402 to 413, 681 to 691, 700 to 717, and 726 to 742; these read VSREDSGSLEKH, KREESGGRRDV, IEAR…RQIP, and MPVD…EKLG. Composition is skewed to pro residues over residues 824–835, 852–870, 877–886, 897–908, 931–965, and 974–1168; these read APPPPPPPPPPY, QPPP…PPPA, IPPPPPPPPL, VPPPPPPPPPPR, ISPP…PPSA, and APPP…PPGG. The 401-residue stretch at 1188–1588 folds into the FH2 domain; that stretch reads FGAAAARKST…RAEKEAEAEK (401 aa). Basic and acidic residues-rich tracts occupy residues 1248–1261 and 1571–1590; these read DSSK…SLGS and KQAE…EKSK. Positions 1600–1611 are enriched in polar residues; that stretch reads KPSNPSRQVKQT. Residues 1612 to 1627 are compositionally biased toward basic and acidic residues; sequence PDTKTRAASRRGKDVG.

The protein belongs to the formin-like family. Class-II subfamily.

This Oryza sativa subsp. japonica (Rice) protein is Formin-like protein 5 (FH5).